The following is a 405-amino-acid chain: Glucose-1-phosphate adenylyltransferase 1 (405 aa).

Residues Tyr96, Gly161, 176–177, and Ser194 contribute to the alpha-D-glucose 1-phosphate site; that span reads EK.

It belongs to the bacterial/plant glucose-1-phosphate adenylyltransferase family. As to quaternary structure, homotetramer.

It carries out the reaction alpha-D-glucose 1-phosphate + ATP + H(+) = ADP-alpha-D-glucose + diphosphate. It functions in the pathway glycan biosynthesis; glycogen biosynthesis. Its function is as follows. Involved in the biosynthesis of ADP-glucose, a building block required for the elongation reactions to produce glycogen. Catalyzes the reaction between ATP and alpha-D-glucose 1-phosphate (G1P) to produce pyrophosphate and ADP-Glc. The protein is Glucose-1-phosphate adenylyltransferase 1 of Vibrio vulnificus (strain CMCP6).